Here is a 144-residue protein sequence, read N- to C-terminus: Large ribosomal subunit protein uL11 (144 aa).

The protein belongs to the universal ribosomal protein uL11 family. As to quaternary structure, part of the ribosomal stalk of the 50S ribosomal subunit. Interacts with L10 and the large rRNA to form the base of the stalk. L10 forms an elongated spine to which L12 dimers bind in a sequential fashion forming a multimeric L10(L12)X complex. One or more lysine residues are methylated.

In terms of biological role, forms part of the ribosomal stalk which helps the ribosome interact with GTP-bound translation factors. The sequence is that of Large ribosomal subunit protein uL11 from Corynebacterium efficiens (strain DSM 44549 / YS-314 / AJ 12310 / JCM 11189 / NBRC 100395).